A 47-amino-acid polypeptide reads, in one-letter code: Small ribosomal subunit protein uS14 (47 aa).

4 residues coordinate Zn(2+): C12, C15, C30, and C33.

Belongs to the universal ribosomal protein uS14 family. Zinc-binding uS14 subfamily. Part of the 30S ribosomal subunit. It depends on Zn(2+) as a cofactor.

In terms of biological role, binds 16S rRNA, required for the assembly of 30S particles. This chain is Small ribosomal subunit protein uS14, found in Methanosphaera stadtmanae (strain ATCC 43021 / DSM 3091 / JCM 11832 / MCB-3).